Reading from the N-terminus, the 118-residue chain is Late cornified envelope protein 5A (118 aa).

Positions 1-10 are enriched in low complexity; it reads MSCQQSQQQC. 2 disordered regions span residues 1 to 32 and 72 to 118; these read MSCQQSQQQCQPPPKCTPKCPPKCTPKCPPKC and HRPR…GGCC. The span at 11–32 shows a compositional bias: pro residues; the sequence is QPPPKCTPKCPPKCTPKCPPKC. Residues 72-82 show a composition bias toward basic residues; the sequence is HRPRQSLRRRP. Residues 97–118 are compositionally biased toward low complexity; it reads GGSSCCHSSGGSGCCHSSGGCC.

The protein belongs to the LCE family. In terms of assembly, interacts with CYSRT1; the interaction is direct. As to expression, skin-specific. Expression was readily detected in adult trunk skin, adult arm skin, fetal skin, penal skin, vulva, esophagus and tongue. Not expressed in the cervix, rectum, lung, colon, or placenta. Expression is observed in the heart.

Precursors of the cornified envelope of the stratum corneum. In Homo sapiens (Human), this protein is Late cornified envelope protein 5A (LCE5A).